We begin with the raw amino-acid sequence, 456 residues long: Chromosomal replication initiator protein DnaA (456 aa).

Residues 1 to 83 (MTASLWQQCL…LRFDIGNRPH (83 aa)) are domain I, interacts with DnaA modulators. Residues 83–119 (HPVAIARAPARGAAPVNNLQKSWESKADAKPEPNHKS) form a domain II region. Residues 120 to 336 (NTNVNYTFEN…GALNRVIANA (217 aa)) are domain III, AAA+ region. Positions 164, 166, 167, and 168 each coordinate ATP. A domain IV, binds dsDNA region spans residues 337–456 (NFTGRAINID…YSNLIRTLSS (120 aa)).

It belongs to the DnaA family. In terms of assembly, oligomerizes as a right-handed, spiral filament on DNA at oriC.

The protein localises to the cytoplasm. Functionally, plays an essential role in the initiation and regulation of chromosomal replication. ATP-DnaA binds to the origin of replication (oriC) to initiate formation of the DNA replication initiation complex once per cell cycle. Binds the DnaA box (a 9 base pair repeat at the origin) and separates the double-stranded (ds)DNA. Forms a right-handed helical filament on oriC DNA; dsDNA binds to the exterior of the filament while single-stranded (ss)DNA is stabiized in the filament's interior. The ATP-DnaA-oriC complex binds and stabilizes one strand of the AT-rich DNA unwinding element (DUE), permitting loading of DNA polymerase. After initiation quickly degrades to an ADP-DnaA complex that is not apt for DNA replication. Binds acidic phospholipids. This is Chromosomal replication initiator protein DnaA from Aeromonas salmonicida (strain A449).